A 205-amino-acid polypeptide reads, in one-letter code: Proteasome subunit beta type-3 (205 aa).

S31 carries the phosphoserine modification. A Glycyl lysine isopeptide (Lys-Gly) (interchain with G-Cter in ubiquitin) cross-link involves residue K70.

It belongs to the peptidase T1B family. The 26S proteasome consists of a 20S proteasome core and two 19S regulatory subunits. The 20S proteasome core is composed of 28 subunits that are arranged in four stacked rings, resulting in a barrel-shaped structure. The two end rings are each formed by seven alpha subunits, and the two central rings are each formed by seven beta subunits. The catalytic chamber with the active sites is on the inside of the barrel.

It localises to the cytoplasm. The protein localises to the nucleus. Non-catalytic component of the proteasome which degrades poly-ubiquitinated proteins in the cytoplasm and in the nucleus. It is essential for the regulated turnover of proteins and for the removal of misfolded proteins. The proteasome is a multicatalytic proteinase complex that is characterized by its ability to cleave peptides with Arg, Phe, Tyr, Leu, and Glu adjacent to the leaving group at neutral or slightly basic pH. It has an ATP-dependent proteolytic activity. This subunit may participate in the trypsin-like activity of the enzyme complex. This is Proteasome subunit beta type-3 (PUP3) from Saccharomyces cerevisiae (strain ATCC 204508 / S288c) (Baker's yeast).